Here is a 434-residue protein sequence, read N- to C-terminus: Bestrophin homolog 12 (434 aa).

The next 4 membrane-spanning stretches (helical) occupy residues 31 to 51 (KVIL…FLVF), 76 to 96 (VCIP…DQWE), 244 to 264 (IPIP…YFFF), and 278 to 298 (WALS…FLVG).

This sequence belongs to the anion channel-forming bestrophin (TC 1.A.46) family. Calcium-sensitive chloride channel subfamily. In terms of assembly, forms oligomers.

The protein localises to the cell membrane. Forms chloride channels. The sequence is that of Bestrophin homolog 12 (best-12) from Caenorhabditis elegans.